Reading from the N-terminus, the 227-residue chain is ATP-dependent dethiobiotin synthetase BioD (227 aa).

ATP is bound at residue 13 to 18; it reads DAGKTT. Residue Thr17 participates in Mg(2+) binding. Lys38 is an active-site residue. ATP is bound by residues Asp55, 118 to 121, 178 to 179, 207 to 209, and Glu214; these read EGAG, NR, and PYI. Positions 55 and 118 each coordinate Mg(2+).

This sequence belongs to the dethiobiotin synthetase family. As to quaternary structure, homodimer. Mg(2+) is required as a cofactor.

The protein localises to the cytoplasm. It carries out the reaction (7R,8S)-7,8-diammoniononanoate + CO2 + ATP = (4R,5S)-dethiobiotin + ADP + phosphate + 3 H(+). It participates in cofactor biosynthesis; biotin biosynthesis; biotin from 7,8-diaminononanoate: step 1/2. In terms of biological role, catalyzes a mechanistically unusual reaction, the ATP-dependent insertion of CO2 between the N7 and N8 nitrogen atoms of 7,8-diaminopelargonic acid (DAPA, also called 7,8-diammoniononanoate) to form a ureido ring. The chain is ATP-dependent dethiobiotin synthetase BioD from Tolumonas auensis (strain DSM 9187 / NBRC 110442 / TA 4).